The primary structure comprises 150 residues: Flagellar assembly factor FliW (150 aa).

The protein belongs to the FliW family. In terms of assembly, interacts with translational regulator CsrA and flagellin(s).

It localises to the cytoplasm. Functionally, acts as an anti-CsrA protein, binds CsrA and prevents it from repressing translation of its target genes, one of which is flagellin. Binds to flagellin and participates in the assembly of the flagellum. This Thermoanaerobacter pseudethanolicus (strain ATCC 33223 / 39E) (Clostridium thermohydrosulfuricum) protein is Flagellar assembly factor FliW.